The sequence spans 214 residues: ATP-dependent Clp protease proteolytic subunit (214 aa).

Catalysis depends on Ser-110, which acts as the Nucleophile. His-135 is an active-site residue.

It belongs to the peptidase S14 family. In terms of assembly, fourteen ClpP subunits assemble into 2 heptameric rings which stack back to back to give a disk-like structure with a central cavity, resembling the structure of eukaryotic proteasomes.

The protein localises to the cytoplasm. The enzyme catalyses Hydrolysis of proteins to small peptides in the presence of ATP and magnesium. alpha-casein is the usual test substrate. In the absence of ATP, only oligopeptides shorter than five residues are hydrolyzed (such as succinyl-Leu-Tyr-|-NHMec, and Leu-Tyr-Leu-|-Tyr-Trp, in which cleavage of the -Tyr-|-Leu- and -Tyr-|-Trp bonds also occurs).. Its function is as follows. Cleaves peptides in various proteins in a process that requires ATP hydrolysis. Has a chymotrypsin-like activity. Plays a major role in the degradation of misfolded proteins. This Legionella pneumophila (strain Paris) protein is ATP-dependent Clp protease proteolytic subunit.